Reading from the N-terminus, the 694-residue chain is Phosphatase and actin regulator 4-A (694 aa).

2 stretches are compositionally biased toward basic and acidic residues: residues 1 to 13 (MEDR…DHSE) and 46 to 72 (SSDS…ELIK). 5 disordered regions span residues 1 to 29 (MEDR…KSKF), 42 to 169 (RKRK…QPLP), 192 to 403 (VNEV…HIRI), 426 to 445 (LFMQ…RSLP), and 450 to 572 (LLKV…QIRQ). The stretch at 55-80 (EVLERKISTRKPREELIKRGLLVEVP) is one RPEL 1 repeat. The span at 240 to 267 (SISTSVTQESAVAGQKSDSSNRLQSSAP) shows a compositional bias: polar residues. Over residues 300-317 (AELSLALAGSPLSPAGSR) the composition is skewed to low complexity. Composition is skewed to pro residues over residues 318-327 (PSPPLPPKRA) and 372-381 (SNPPVPPLTL). Composition is skewed to acidic residues over residues 455 to 467 (DDED…DESL), 499 to 511 (QEEE…DTDS), and 519 to 529 (DDEEEEEEEET). RPEL repeat units lie at residues 576–601 (TQLN…QKNE) and 613–638 (RRLT…RFNE).

This sequence belongs to the phosphatase and actin regulator family. As to quaternary structure, binds ppp1ca and actin.

It localises to the cytoplasm. The protein resides in the cell projection. Its subcellular location is the lamellipodium. In terms of biological role, regulator of protein phosphatase 1 (PP1) required for neural tube and optic fissure closure, and enteric neural crest cell (ENCCs) migration during development. Acts as an activator of PP1. During neural tube closure, localizes to the ventral neural tube and activates PP1, leading to down-regulate cell proliferation within cranial neural tissue and the neural retina. Also acts as a regulator of migration of enteric neural crest cells (ENCCs) by activating PP1, leading to repression of the integrin signaling through the rho/rock pathway. The polypeptide is Phosphatase and actin regulator 4-A (phactr4-a) (Xenopus laevis (African clawed frog)).